The sequence spans 277 residues: UPF0276 protein PP_2398 (277 aa).

It belongs to the UPF0276 family.

This is UPF0276 protein PP_2398 from Pseudomonas putida (strain ATCC 47054 / DSM 6125 / CFBP 8728 / NCIMB 11950 / KT2440).